A 181-amino-acid polypeptide reads, in one-letter code: UPF0215 protein AF_1433 (181 aa).

Belongs to the UPF0215 family.

The protein is UPF0215 protein AF_1433 of Archaeoglobus fulgidus (strain ATCC 49558 / DSM 4304 / JCM 9628 / NBRC 100126 / VC-16).